Consider the following 298-residue polypeptide: Acetylglutamate kinase (298 aa).

Substrate contacts are provided by residues Gly-69–Gly-70, Arg-91, and Asn-196.

This sequence belongs to the acetylglutamate kinase family. ArgB subfamily.

Its subcellular location is the cytoplasm. The enzyme catalyses N-acetyl-L-glutamate + ATP = N-acetyl-L-glutamyl 5-phosphate + ADP. It functions in the pathway amino-acid biosynthesis; L-arginine biosynthesis; N(2)-acetyl-L-ornithine from L-glutamate: step 2/4. Its function is as follows. Catalyzes the ATP-dependent phosphorylation of N-acetyl-L-glutamate. The polypeptide is Acetylglutamate kinase (Bradyrhizobium sp. (strain ORS 278)).